The following is a 404-amino-acid chain: Trigger factor (404 aa).

In terms of domain architecture, PPIase FKBP-type spans 160–225 (KDHLFVRTEE…VLEVKTLKLP (66 aa)).

This sequence belongs to the FKBP-type PPIase family. Tig subfamily.

The protein localises to the cytoplasm. The enzyme catalyses [protein]-peptidylproline (omega=180) = [protein]-peptidylproline (omega=0). Involved in protein export. Acts as a chaperone by maintaining the newly synthesized protein in an open conformation. Functions as a peptidyl-prolyl cis-trans isomerase. The chain is Trigger factor from Thermus thermophilus (strain ATCC BAA-163 / DSM 7039 / HB27).